A 447-amino-acid chain; its full sequence is uncharacterized protein (447 aa).

A run of 2 helical transmembrane segments spans residues 380 to 400 (VLEI…LLLT) and 412 to 432 (ILGF…GVYV).

The protein resides in the cell membrane. This is an uncharacterized protein from Methanocaldococcus jannaschii (strain ATCC 43067 / DSM 2661 / JAL-1 / JCM 10045 / NBRC 100440) (Methanococcus jannaschii).